The chain runs to 623 residues: Kelch repeat and BTB domain-containing protein 2 (623 aa).

One can recognise a BTB domain in the interval 31–98; it reads TDIVLIVEGT…AYTGNLAMND (68 aa). The 97-residue stretch at 133 to 229 folds into the BACK domain; it reads CVRLLSFADL…IRIDALSEVT (97 aa). Position 300 is a phosphoserine (S300). 5 Kelch repeats span residues 317 to 380, 381 to 429, 431 to 469, 470 to 529, and 535 to 581; these read DIYI…CCEG, YIYA…VVHD, IYVMTLNLMYCYFPRSDSWVEMAMRQTSRSFASAAAFGD, KIFY…RAVV, and CVFM…DFRC.

As to quaternary structure, component of the BCR(KBTBD2) E3 ubiquitin ligase complex, at least composed of CUL3, KBTBD2 and RBX1. Interacts (via the BTB domain) with CUL3.

The protein operates within protein modification; protein ubiquitination. In terms of biological role, substrate-specific adapter of a BCR (BTB-CUL3-RBX1) E3 ubiquitin ligase complex that acts as a regulator of the insulin signaling pathway, modulating insulin sensitivity by limiting PIK3R1/p85alpha abundance in adipocytes. Targets PIK3R1, the regulatory subunit of phosphatidylinositol 3-kinase (PI3K), for 'Lys-48'-linked polyubiquitination and proteasome-mediated degradation. The chain is Kelch repeat and BTB domain-containing protein 2 from Homo sapiens (Human).